A 186-amino-acid polypeptide reads, in one-letter code: Temperature-induced lipocalin-1 (186 aa).

An HPR (Hydrophobic proline-rich) motif is present at residues 90-97 (PPFLPIIP). Residues 154–174 (KLHKTPQSDTPPESNTAPEDS) are disordered. Residues 158-171 (TPQSDTPPESNTAP) show a composition bias toward polar residues.

The protein belongs to the calycin superfamily. Lipocalin family. Expressed ubiquitously at similar levels, except in dry seeds (at protein level). Present in seeds.

It is found in the cell membrane. The protein resides in the cytoplasm. The protein localises to the plastid. Its subcellular location is the chloroplast membrane. In terms of biological role, involved in basal (BT) and acquired thermotolerance (AT), probably by preventing plasma membrane lipids peroxidation induced by severe heat-shock (HS). Lipocalin that confers protection against oxidative stress caused by heat, freezing, paraquat and light. Confers resistance to high salt (NaCl) levels, probably by protecting chloroplasts from ion toxicity via ion homeostasis maintenance. Required for seed longevity by ensuring polyunsaturated lipids integrity. This is Temperature-induced lipocalin-1 from Arabidopsis thaliana (Mouse-ear cress).